Consider the following 544-residue polypeptide: Ceramide glucosyltransferase (544 aa).

Topologically, residues 1-15 are lumenal; it reads MVQEELSLFRITTGY. Residues 16–36 traverse the membrane as a helical segment; that stretch reads FFLLWYIIILVAAYSGFFEIL. Residues 37–427 lie on the Cytoplasmic side of the membrane; that stretch reads FNFRNRPILH…LATLIEPTTE (391 aa). A short sequence motif (D1) is located at residue D109. D171 is a short sequence motif (D2). A short sequence motif (D3) is located at residue D364. The active-site Proton acceptor is the D364. A (Q/R)XXRW motif is present at residues 404–408; the sequence is RRVRW. Residues 428–448 form a helical membrane-spanning segment; that stretch reads SIICGIYGTYAISTVFFGTWF. The Lumenal segment spans residues 449–451; that stretch reads NKY. A helical transmembrane segment spans residues 452–472; it reads WFVMHMLIWMLTDYVQYHTLI. The Cytoplasmic portion of the chain corresponds to 473-501; it reads NHTLDVKNITYLPNWLNESIPPKQRNCLQ. A helical transmembrane segment spans residues 502–522; it reads WGYIWILRELLALPIWIIAMI. Residues 523 to 544 lie on the Lumenal side of the membrane; that stretch reads GHEIDWRGRPFRIKKDLTAEEM.

It belongs to the glycosyltransferase 2 family.

The protein localises to the golgi apparatus membrane. The catalysed reaction is an N-acylsphing-4-enine + UDP-alpha-D-glucose = a beta-D-glucosyl-(1&lt;-&gt;1')-N-acylsphing-4-enine + UDP + H(+). The protein operates within lipid metabolism; sphingolipid metabolism. Its function is as follows. Catalyzes the final step in the biosynthesis of the membrane lipid glucosylceramide (GluCer), the transfer of glucose to ceramide. Glucosylceramides play important roles in growth, differentiation and pathogenicity. The sequence is that of Ceramide glucosyltransferase from Candida albicans (strain SC5314 / ATCC MYA-2876) (Yeast).